Reading from the N-terminus, the 70-residue chain is Biotin carboxyl carrier protein of acetyl-CoA carboxylase (70 aa).

The Biotinyl-binding domain occupies Gly1–Lys69. Lys35 bears the N6-biotinyllysine mark.

It is found in the plastid. Its subcellular location is the chloroplast. The protein operates within lipid metabolism; fatty acid biosynthesis. In terms of biological role, this protein is a component of the acetyl coenzyme A carboxylase complex; first, biotin carboxylase catalyzes the carboxylation of the carrier protein and then the transcarboxylase transfers the carboxyl group to form malonyl-CoA. The chain is Biotin carboxyl carrier protein of acetyl-CoA carboxylase from Solanum lycopersicum (Tomato).